The following is a 56-amino-acid chain: Aspartyl-phosphate phosphatase YisI (56 aa).

Belongs to the spo0E family.

In terms of biological role, aspartyl-phosphate phosphatase which specifically dephosphorylates the sporulation transcription factor Spo0A-P and negatively regulates the sporulation initiation pathway in order to control the proper timing of sporulation. The protein is Aspartyl-phosphate phosphatase YisI (yisI) of Bacillus subtilis (strain 168).